The chain runs to 370 residues: Anhydro-N-acetylmuramic acid kinase (370 aa).

12 to 19 is an ATP binding site; the sequence is GTSLDGVD.

It belongs to the anhydro-N-acetylmuramic acid kinase family.

It carries out the reaction 1,6-anhydro-N-acetyl-beta-muramate + ATP + H2O = N-acetyl-D-muramate 6-phosphate + ADP + H(+). The protein operates within amino-sugar metabolism; 1,6-anhydro-N-acetylmuramate degradation. Its pathway is cell wall biogenesis; peptidoglycan recycling. Functionally, catalyzes the specific phosphorylation of 1,6-anhydro-N-acetylmuramic acid (anhMurNAc) with the simultaneous cleavage of the 1,6-anhydro ring, generating MurNAc-6-P. Is required for the utilization of anhMurNAc either imported from the medium or derived from its own cell wall murein, and thus plays a role in cell wall recycling. This is Anhydro-N-acetylmuramic acid kinase from Proteus mirabilis (strain HI4320).